The chain runs to 95 residues: Selenoprotein K (95 aa).

A helical transmembrane segment spans residues 20-42 (LSFITDFFWGIAEFVVLFFRTLL). A disordered region spans residues 47 to 95 (KKRRGYGSSSDSRYDDGRGPPGNPPRRRMGRINHLQGPNPPPMAGGUGR). Residue Sec93 is a non-standard amino acid, selenocysteine.

Belongs to the selenoprotein K family. In terms of assembly, interacts with DERL1, DERL2, DERL3 and SELENOS. The SELENOK-SELENOS complex interacts with VCP. Interacts with ZDHHC6. Post-translationally, cleaved by CAPN2/m-calpain in resting macrophages but not in activated macrophages. Macrophage activation up-regulates expression of the calpain inhibitor CAST/calpastatin, resulting in inhibition of CAPN2 activity. Truncated SELENOK proteins produced by failed UGA/Sec decoding are ubiquitinated by the CRL2(KLHDC2) complex, which recognizes the diglycine (Gly-Gly) at the C-terminus of truncated SELENOK proteins.

It localises to the endoplasmic reticulum membrane. The protein localises to the cell membrane. Functionally, required for Ca(2+) flux in immune cells and plays a role in T-cell proliferation and in T-cell and neutrophil migration. Involved in endoplasmic reticulum-associated degradation (ERAD) of soluble glycosylated proteins. Required for palmitoylation and cell surface expression of CD36 and involved in macrophage uptake of low-density lipoprotein and in foam cell formation. Together with ZDHHC6, required for palmitoylation of ITPR1 in immune cells, leading to regulate ITPR1 stability and function. Plays a role in protection of cells from ER stress-induced apoptosis. Protects cells from oxidative stress when overexpressed in cardiomyocytes. This is Selenoprotein K from Bos taurus (Bovine).